Here is a 177-residue protein sequence, read N- to C-terminus: Large ribosomal subunit protein uL6 (177 aa).

It belongs to the universal ribosomal protein uL6 family. Part of the 50S ribosomal subunit.

In terms of biological role, this protein binds to the 23S rRNA, and is important in its secondary structure. It is located near the subunit interface in the base of the L7/L12 stalk, and near the tRNA binding site of the peptidyltransferase center. This chain is Large ribosomal subunit protein uL6, found in Marinomonas sp. (strain MWYL1).